The primary structure comprises 284 residues: MMEQKTVHIGNMPIANDKPFTLFAGMNVLESRDLAMQICEHYVKVTEKLGIPYVFKASFDKANRSSVHSYRGPGMEEGLKIFQELKDTFGVKIITDIHTEAQAQPVADVVDVIQLPAFLARQTDLVEAMAKTGAVINVKKPQFMSPDQVGNIVDKFAECGNENIILCERGSCMGYDNLVVDMLGFGVMKKSSNGSPIIFDVTHALQMRDPSGAASGGRREQTVELAKAGIATGIAGLFLEAHPNPDQARCDGPSALPLDKLEPFLKQMKALDDLIKGFEHIEIK.

Belongs to the KdsA family.

It localises to the cytoplasm. The catalysed reaction is D-arabinose 5-phosphate + phosphoenolpyruvate + H2O = 3-deoxy-alpha-D-manno-2-octulosonate-8-phosphate + phosphate. It participates in carbohydrate biosynthesis; 3-deoxy-D-manno-octulosonate biosynthesis; 3-deoxy-D-manno-octulosonate from D-ribulose 5-phosphate: step 2/3. Its pathway is bacterial outer membrane biogenesis; lipopolysaccharide biosynthesis. This chain is 2-dehydro-3-deoxyphosphooctonate aldolase, found in Vibrio atlanticus (strain LGP32) (Vibrio splendidus (strain Mel32)).